Consider the following 345-residue polypeptide: Biotin synthase (345 aa).

A Radical SAM core domain is found at 67 to 295 (YKVQLASLLS…KSRIRLSAGR (229 aa)). [4Fe-4S] cluster contacts are provided by Cys82, Cys86, and Cys89. [2Fe-2S] cluster-binding residues include Cys126, Cys158, Cys218, and Arg290.

This sequence belongs to the radical SAM superfamily. Biotin synthase family. As to quaternary structure, homodimer. Requires [4Fe-4S] cluster as cofactor. [2Fe-2S] cluster serves as cofactor.

The enzyme catalyses (4R,5S)-dethiobiotin + (sulfur carrier)-SH + 2 reduced [2Fe-2S]-[ferredoxin] + 2 S-adenosyl-L-methionine = (sulfur carrier)-H + biotin + 2 5'-deoxyadenosine + 2 L-methionine + 2 oxidized [2Fe-2S]-[ferredoxin]. It participates in cofactor biosynthesis; biotin biosynthesis; biotin from 7,8-diaminononanoate: step 2/2. Functionally, catalyzes the conversion of dethiobiotin (DTB) to biotin by the insertion of a sulfur atom into dethiobiotin via a radical-based mechanism. In Prochlorococcus marinus (strain NATL2A), this protein is Biotin synthase.